The primary structure comprises 278 residues: Gamma carbonic anhydrase 2, mitochondrial (278 aa).

The N-terminal 43 residues, 1 to 43, are a transit peptide targeting the mitochondrion; the sequence is MGTLGRAIYTVGNWIRGTGQALDRVGSLLQGSHRIEEHLSRHR. Substrate is bound by residues 86 to 88 and 101 to 102; these read RGD and QD. 3 residues coordinate Zn(2+): H107, H130, and H135. Substrate is bound at residue N209.

It belongs to the gamma-class carbonic anhydrase family. As to quaternary structure, homotrimer. Component of the mitochondrial oxidoreductase respiratory chain complex I; element of the extra matrix-exposed domain, which is attached to the membrane arm of this complex. Interacts with GAMMACAL1 and GAMMACAL2. It depends on Zn(2+) as a cofactor. As to expression, constitutively expressed in roots and leaves, with higher levels in flowers, particularly in tapetal tissue of anthers, inflorescence (IM) and floral meristems (FM).

Its subcellular location is the mitochondrion membrane. Enzyme involved in the catabolism of H(2)CO(3) but that does not mediates the reversible hydration of carbon dioxide. Mediates complex I assembly in mitochondria and respiration. Binds HCO(3)-. Required for male fertility during anther development and dehiscence to regulate the secondary thickenings of the endothecial cell wall, probably by modulating H(2)O(2)-dependent lignin polymerization. The chain is Gamma carbonic anhydrase 2, mitochondrial (GAMMACA2) from Arabidopsis thaliana (Mouse-ear cress).